We begin with the raw amino-acid sequence, 888 residues long: uncharacterized protein (888 aa).

The N-terminal stretch at 1–20 is a signal peptide; the sequence is MKILKSLVLLVLFIVMPAKA. Transmembrane regions (helical) follow at residues 513 to 533, 565 to 585, 611 to 631, 649 to 669, 682 to 702, and 781 to 801; these read IVKAALTLYVIIFGLMFVAGA, TYFFSVFTDGINFFITNVVGA, LLFIELLQIHNGLAFIAIITI, VIAFIGITVMISLAPFFIILM, ISTLLSYVVQPTILLIFFLLI, and LLFYSYCLMSYGLVTFVNIVV.

Belongs to the TrbL/VirB6 family.

The protein localises to the cell membrane. This is an uncharacterized protein from Rickettsia prowazekii (strain Madrid E).